We begin with the raw amino-acid sequence, 66 residues long: Potassium channel toxin alpha-KTx 30.1 (66 aa).

The N-terminal stretch at 1-24 (MNTGFFFFVIMATGLVLTFDTIHA) is a signal peptide. 3 cysteine pairs are disulfide-bonded: C30/C50, C36/C55, and C40/C57.

It belongs to the short scorpion toxin superfamily. Potassium channel inhibitor family. Alpha-KTx 30 subfamily. As to expression, expressed by the venom gland.

Its subcellular location is the secreted. In terms of biological role, inhibits Kv1.3/KCNA3 channel (1 uM of the toxin inhibits currents by 64.1%). The polypeptide is Potassium channel toxin alpha-KTx 30.1 (Scorpiops margerisonae (Scorpion)).